Consider the following 632-residue polypeptide: Mitochondrial distribution and morphology protein 34 (632 aa).

The region spanning 1-203 (MSFKVNWNSL…LPTLIHQLSL (203 aa)) is the SMP-LTD domain. Disordered stretches follow at residues 221-253 (ANAS…TSSL) and 384-435 (KPKR…SSTL). The span at 224 to 252 (STSSSSTSSTSSSTTSSSSSSSPSSFTSS) shows a compositional bias: low complexity. Basic residues predominate over residues 384 to 400 (KPKRRVIRLGKSKNKSK). The span at 401–412 (SKTETKTEHNDE) shows a compositional bias: basic and acidic residues. The span at 422–435 (PLSSTPASSSSSTL) shows a compositional bias: low complexity.

The protein belongs to the MDM34 family. As to quaternary structure, component of the ER-mitochondria encounter structure (ERMES) or MDM complex, composed of MMM1, MDM10, MDM12 and MDM34.

It is found in the mitochondrion outer membrane. In terms of biological role, component of the ERMES/MDM complex, which serves as a molecular tether to connect the endoplasmic reticulum (ER) and mitochondria. Components of this complex are involved in the control of mitochondrial shape and protein biogenesis, and function in nonvesicular lipid trafficking between the ER and mitochondria. MDM34 is required for the interaction of the ER-resident membrane protein MMM1 and the outer mitochondrial membrane-resident beta-barrel protein MDM10. The sequence is that of Mitochondrial distribution and morphology protein 34 from Lodderomyces elongisporus (strain ATCC 11503 / CBS 2605 / JCM 1781 / NBRC 1676 / NRRL YB-4239) (Yeast).